The sequence spans 238 residues: Ribonuclease PH (238 aa).

Residues R86 and 124–126 contribute to the phosphate site; that span reads GTR.

Belongs to the RNase PH family. Homohexameric ring arranged as a trimer of dimers.

It catalyses the reaction tRNA(n+1) + phosphate = tRNA(n) + a ribonucleoside 5'-diphosphate. Its function is as follows. Phosphorolytic 3'-5' exoribonuclease that plays an important role in tRNA 3'-end maturation. Removes nucleotide residues following the 3'-CCA terminus of tRNAs; can also add nucleotides to the ends of RNA molecules by using nucleoside diphosphates as substrates, but this may not be physiologically important. Probably plays a role in initiation of 16S rRNA degradation (leading to ribosome degradation) during starvation. The polypeptide is Ribonuclease PH (Mesorhizobium japonicum (strain LMG 29417 / CECT 9101 / MAFF 303099) (Mesorhizobium loti (strain MAFF 303099))).